The sequence spans 93 residues: Pyrimidine/purine nucleoside phosphorylase (93 aa).

This sequence belongs to the nucleoside phosphorylase PpnP family.

It catalyses the reaction a purine D-ribonucleoside + phosphate = a purine nucleobase + alpha-D-ribose 1-phosphate. The catalysed reaction is adenosine + phosphate = alpha-D-ribose 1-phosphate + adenine. The enzyme catalyses cytidine + phosphate = cytosine + alpha-D-ribose 1-phosphate. It carries out the reaction guanosine + phosphate = alpha-D-ribose 1-phosphate + guanine. It catalyses the reaction inosine + phosphate = alpha-D-ribose 1-phosphate + hypoxanthine. The catalysed reaction is thymidine + phosphate = 2-deoxy-alpha-D-ribose 1-phosphate + thymine. The enzyme catalyses uridine + phosphate = alpha-D-ribose 1-phosphate + uracil. It carries out the reaction xanthosine + phosphate = alpha-D-ribose 1-phosphate + xanthine. Its function is as follows. Catalyzes the phosphorolysis of diverse nucleosides, yielding D-ribose 1-phosphate and the respective free bases. Can use uridine, adenosine, guanosine, cytidine, thymidine, inosine and xanthosine as substrates. Also catalyzes the reverse reactions. This is Pyrimidine/purine nucleoside phosphorylase from Hahella chejuensis (strain KCTC 2396).